A 914-amino-acid chain; its full sequence is Neutral alpha-glucosidase C (914 aa).

The active-site Nucleophile is Asp511. Glu514 is an active-site residue. Residue Asp587 is the Proton donor of the active site.

This sequence belongs to the glycosyl hydrolase 31 family.

It carries out the reaction Hydrolysis of terminal, non-reducing (1-&gt;4)-linked alpha-D-glucose residues with release of alpha-D-glucose.. In terms of biological role, has alpha-glucosidase activity. This is Neutral alpha-glucosidase C (GANC) from Homo sapiens (Human).